Consider the following 344-residue polypeptide: Inositol 2-dehydrogenase/D-chiro-inositol 3-dehydrogenase (344 aa).

Belongs to the Gfo/Idh/MocA family. As to quaternary structure, homotetramer.

It catalyses the reaction myo-inositol + NAD(+) = scyllo-inosose + NADH + H(+). It carries out the reaction 1D-chiro-inositol + NAD(+) = scyllo-inosine + NADH + H(+). Its pathway is polyol metabolism; myo-inositol degradation into acetyl-CoA; acetyl-CoA from myo-inositol: step 1/7. In terms of biological role, involved in the oxidation of myo-inositol (MI) and D-chiro-inositol (DCI) to 2-keto-myo-inositol (2KMI or 2-inosose) and 1-keto-D-chiro-inositol (1KDCI), respectively. The sequence is that of Inositol 2-dehydrogenase/D-chiro-inositol 3-dehydrogenase from Bacillus licheniformis (strain ATCC 14580 / DSM 13 / JCM 2505 / CCUG 7422 / NBRC 12200 / NCIMB 9375 / NCTC 10341 / NRRL NRS-1264 / Gibson 46).